The primary structure comprises 116 residues: Large-conductance mechanosensitive channel (116 aa).

Transmembrane regions (helical) follow at residues 7–27 and 64–84; these read EFAL…GAAF and GLFI…FIFV.

It belongs to the MscL family. As to quaternary structure, homopentamer.

Its subcellular location is the cell membrane. In terms of biological role, channel that opens in response to stretch forces in the membrane lipid bilayer. May participate in the regulation of osmotic pressure changes within the cell. The sequence is that of Large-conductance mechanosensitive channel from Staphylococcus epidermidis (strain ATCC 35984 / DSM 28319 / BCRC 17069 / CCUG 31568 / BM 3577 / RP62A).